The sequence spans 260 residues: 3'-5' ssDNA/RNA exonuclease TatD (260 aa).

A divalent metal cation contacts are provided by glutamate 91, histidine 127, and histidine 152.

This sequence belongs to the metallo-dependent hydrolases superfamily. TatD-type hydrolase family. TatD subfamily. As to quaternary structure, monomer. It depends on Mg(2+) as a cofactor.

Its subcellular location is the cytoplasm. 3'-5' exonuclease that prefers single-stranded DNA and RNA. May play a role in the H(2)O(2)-induced DNA damage repair. The sequence is that of 3'-5' ssDNA/RNA exonuclease TatD from Enterobacter sp. (strain 638).